Consider the following 127-residue polypeptide: Alpha-hordothionin (127 aa).

The first 18 residues, 1 to 18, serve as a signal peptide directing secretion; it reads MVCLLILGLVLEQVQVEG. Cystine bridges form between cysteine 21/cysteine 57, cysteine 22/cysteine 49, cysteine 30/cysteine 47, and cysteine 34/cysteine 43. The propeptide at 64-127 is acidic domain; that stretch reads LALVSNSDEP…GDAGLTSLTA (64 aa).

It belongs to the plant thionin (TC 1.C.44) family. 4 C-C subfamily.

It is found in the secreted. Its function is as follows. Thionins are small plant proteins which are toxic to animal cells. They seem to exert their toxic effect at the level of the cell membrane. Their precise function is not known. This is Alpha-hordothionin (THI1.1) from Hordeum vulgare (Barley).